Here is a 623-residue protein sequence, read N- to C-terminus: V-type proton ATPase catalytic subunit A (623 aa).

252 to 259 is an ATP binding site; that stretch reads GAFGCGKT.

It belongs to the ATPase alpha/beta chains family. In terms of assembly, V-ATPase is a heteromultimeric enzyme composed of a peripheral catalytic V1 complex (main components: subunits A, B, C, D, E, and F) attached to an integral membrane V0 proton pore complex (main component: the proteolipid protein).

It catalyses the reaction ATP + H2O + 4 H(+)(in) = ADP + phosphate + 5 H(+)(out). In terms of biological role, catalytic subunit of the peripheral V1 complex of vacuolar ATPase. V-ATPase vacuolar ATPase is responsible for acidifying a variety of intracellular compartments in eukaryotic cells. This is V-type proton ATPase catalytic subunit A from Citrus unshiu (Satsuma mandarin).